The primary structure comprises 134 residues: NADH-quinone oxidoreductase subunit A 1 (134 aa).

Transmembrane regions (helical) follow at residues 10 to 30 (LIPL…LLLA), 65 to 85 (FYLI…ILAW), and 94 to 114 (IPGL…LVWL).

This sequence belongs to the complex I subunit 3 family. In terms of assembly, NDH-1 is composed of 14 different subunits. Subunits NuoA, H, J, K, L, M, N constitute the membrane sector of the complex.

The protein resides in the cell inner membrane. The enzyme catalyses a quinone + NADH + 5 H(+)(in) = a quinol + NAD(+) + 4 H(+)(out). NDH-1 shuttles electrons from NADH, via FMN and iron-sulfur (Fe-S) centers, to quinones in the respiratory chain. The immediate electron acceptor for the enzyme in this species is believed to be ubiquinone. Couples the redox reaction to proton translocation (for every two electrons transferred, four hydrogen ions are translocated across the cytoplasmic membrane), and thus conserves the redox energy in a proton gradient. This chain is NADH-quinone oxidoreductase subunit A 1, found in Citrifermentans bemidjiense (strain ATCC BAA-1014 / DSM 16622 / JCM 12645 / Bem) (Geobacter bemidjiensis).